Here is a 456-residue protein sequence, read N- to C-terminus: ATP synthase subunit beta 1 (456 aa).

Position 152 to 159 (152 to 159 (GGAGVGKS)) interacts with ATP.

Belongs to the ATPase alpha/beta chains family. F-type ATPases have 2 components, CF(1) - the catalytic core - and CF(0) - the membrane proton channel. CF(1) has five subunits: alpha(3), beta(3), gamma(1), delta(1), epsilon(1). CF(0) has three main subunits: a(1), b(2) and c(9-12). The alpha and beta chains form an alternating ring which encloses part of the gamma chain. CF(1) is attached to CF(0) by a central stalk formed by the gamma and epsilon chains, while a peripheral stalk is formed by the delta and b chains.

The protein localises to the cell membrane. The enzyme catalyses ATP + H2O + 4 H(+)(in) = ADP + phosphate + 5 H(+)(out). Functionally, produces ATP from ADP in the presence of a proton gradient across the membrane. The catalytic sites are hosted primarily by the beta subunits. In Listeria monocytogenes serotype 4b (strain F2365), this protein is ATP synthase subunit beta 1.